The primary structure comprises 443 residues: ATP-dependent protease ATPase subunit HslU (443 aa).

Residues Ile-19, 61 to 66 (GVGKTE), Asp-256, Glu-321, and Arg-393 contribute to the ATP site.

This sequence belongs to the ClpX chaperone family. HslU subfamily. In terms of assembly, a double ring-shaped homohexamer of HslV is capped on each side by a ring-shaped HslU homohexamer. The assembly of the HslU/HslV complex is dependent on binding of ATP.

Its subcellular location is the cytoplasm. Its function is as follows. ATPase subunit of a proteasome-like degradation complex; this subunit has chaperone activity. The binding of ATP and its subsequent hydrolysis by HslU are essential for unfolding of protein substrates subsequently hydrolyzed by HslV. HslU recognizes the N-terminal part of its protein substrates and unfolds these before they are guided to HslV for hydrolysis. This chain is ATP-dependent protease ATPase subunit HslU, found in Cupriavidus pinatubonensis (strain JMP 134 / LMG 1197) (Cupriavidus necator (strain JMP 134)).